A 102-amino-acid polypeptide reads, in one-letter code: Large ribosomal subunit protein bL21 (102 aa).

Belongs to the bacterial ribosomal protein bL21 family. In terms of assembly, part of the 50S ribosomal subunit. Contacts protein L20.

In terms of biological role, this protein binds to 23S rRNA in the presence of protein L20. This is Large ribosomal subunit protein bL21 from Cutibacterium acnes (strain DSM 16379 / KPA171202) (Propionibacterium acnes).